The sequence spans 89 residues: Small ribosomal subunit protein uS15 (89 aa).

It belongs to the universal ribosomal protein uS15 family. Part of the 30S ribosomal subunit. Forms a bridge to the 50S subunit in the 70S ribosome, contacting the 23S rRNA.

Its function is as follows. One of the primary rRNA binding proteins, it binds directly to 16S rRNA where it helps nucleate assembly of the platform of the 30S subunit by binding and bridging several RNA helices of the 16S rRNA. Forms an intersubunit bridge (bridge B4) with the 23S rRNA of the 50S subunit in the ribosome. The protein is Small ribosomal subunit protein uS15 of Staphylococcus aureus (strain JH1).